Consider the following 200-residue polypeptide: Transcription elongation factor A protein-like 3 (200 aa).

Basic and acidic residues predominate over residues 1–19 (MEEVRGENEGKLEKEGKPE). The interval 1-200 (MEEVRGENEG…QRGLHDIPYL (200 aa)) is disordered. Acidic residues predominate over residues 20–34 (DEVEPEDEEKSDEDE). Ser-30 is subject to Phosphoserine. Basic and acidic residues-rich tracts occupy residues 47–85 (GKPE…KPDS), 94–106 (RAAE…DYVP), and 114–153 (DRGT…EELR).

The protein belongs to the TFS-II family. TFA subfamily.

The protein resides in the nucleus. Functionally, may be involved in transcriptional regulation. This is Transcription elongation factor A protein-like 3 (Tceal3) from Mus musculus (Mouse).